The chain runs to 430 residues: UDP-N-acetylglucosamine 1-carboxyvinyltransferase 1 (430 aa).

Phosphoenolpyruvate is bound at residue 22 to 23; it reads KN. Arg-93 provides a ligand contact to UDP-N-acetyl-alpha-D-glucosamine. The Proton donor role is filled by Cys-117. A 2-(S-cysteinyl)pyruvic acid O-phosphothioketal modification is found at Cys-117. Residues 122–126, Asp-305, and Val-327 each bind UDP-N-acetyl-alpha-D-glucosamine; that span reads RPVDL.

The protein belongs to the EPSP synthase family. MurA subfamily.

The protein resides in the cytoplasm. It carries out the reaction phosphoenolpyruvate + UDP-N-acetyl-alpha-D-glucosamine = UDP-N-acetyl-3-O-(1-carboxyvinyl)-alpha-D-glucosamine + phosphate. It participates in cell wall biogenesis; peptidoglycan biosynthesis. Functionally, cell wall formation. Adds enolpyruvyl to UDP-N-acetylglucosamine. This is UDP-N-acetylglucosamine 1-carboxyvinyltransferase 1 from Listeria monocytogenes serovar 1/2a (strain ATCC BAA-679 / EGD-e).